Consider the following 161-residue polypeptide: Heme transporter hrg-6 (161 aa).

4 helical membrane passes run 13–33 (IAYT…YIFA), 38–58 (VALA…YFYL), 75–95 (VLFW…ITAI), and 115–135 (WWST…NAFI).

This sequence belongs to the HRG family.

Its subcellular location is the membrane. Its function is as follows. Heme transporter. This Caenorhabditis elegans protein is Heme transporter hrg-6 (hrg-6).